The following is a 289-amino-acid chain: Shikimate kinase (289 aa).

Residue 84 to 94 (PVASGLSSSSA) coordinates ATP.

The protein belongs to the GHMP kinase family. Archaeal shikimate kinase subfamily.

Its subcellular location is the cytoplasm. The enzyme catalyses shikimate + ATP = 3-phosphoshikimate + ADP + H(+). Its pathway is metabolic intermediate biosynthesis; chorismate biosynthesis; chorismate from D-erythrose 4-phosphate and phosphoenolpyruvate: step 5/7. The protein is Shikimate kinase (aroK) of Methanothermobacter thermautotrophicus (strain ATCC 29096 / DSM 1053 / JCM 10044 / NBRC 100330 / Delta H) (Methanobacterium thermoautotrophicum).